We begin with the raw amino-acid sequence, 274 residues long: Penicillin-insensitive murein endopeptidase (274 aa).

A signal peptide spans 1–19 (MNKTAIALLALLASSASLA). Disulfide bonds link Cys-44/Cys-265, Cys-187/Cys-235, and Cys-216/Cys-223. His-110, His-113, Asp-120, Asp-147, His-150, and His-211 together coordinate Zn(2+). The segment at 227-274 (PLPPPGDGCGAELQSWFEPPKPGTTKPEKKTPPPLPPSCQALLDEHVI) is disordered.

The protein belongs to the peptidase M74 family. As to quaternary structure, dimer. The cofactor is Zn(2+).

Its subcellular location is the periplasm. In terms of biological role, murein endopeptidase that cleaves the D-alanyl-meso-2,6-diamino-pimelyl amide bond that connects peptidoglycan strands. Likely plays a role in the removal of murein from the sacculus. The chain is Penicillin-insensitive murein endopeptidase from Escherichia coli O9:H4 (strain HS).